A 178-amino-acid polypeptide reads, in one-letter code: Large ribosomal subunit protein uL6 (178 aa).

It belongs to the universal ribosomal protein uL6 family. Part of the 50S ribosomal subunit.

This protein binds to the 23S rRNA, and is important in its secondary structure. It is located near the subunit interface in the base of the L7/L12 stalk, and near the tRNA binding site of the peptidyltransferase center. This chain is Large ribosomal subunit protein uL6, found in Francisella philomiragia subsp. philomiragia (strain ATCC 25017 / CCUG 19701 / FSC 153 / O#319-036).